The following is a 245-amino-acid chain: Putative transport permease YvfS (245 aa).

The next 6 membrane-spanning stretches (helical) occupy residues 20-40, 53-73, 103-123, 137-157, 164-184, and 214-234; these read YFVLWSLIMPIAFYYFFTNVV, HYLMSMTVFSVMGSSIMTLGI, IGQSVIHVLSITVIFLFGAII, GLWILFGALPFLALGTLIGLM, AGISNVLYMLLALGGGMWMPF, and GSPTWKNILILIAYMMLFMLL. In terms of domain architecture, ABC transmembrane type-2 spans 20 to 242; that stretch reads YFVLWSLIMP…LLSKYIRRKQ (223 aa).

The protein belongs to the ABC-2 integral membrane protein family.

It localises to the cell membrane. The sequence is that of Putative transport permease YvfS (yvfS) from Bacillus subtilis (strain 168).